Here is a 223-residue protein sequence, read N- to C-terminus: Thiamine-phosphate synthase (223 aa).

4-amino-2-methyl-5-(diphosphooxymethyl)pyrimidine is bound by residues 37–41 and Asn69; that span reads QLREK. 2 residues coordinate Mg(2+): Asp70 and Asp89. A 4-amino-2-methyl-5-(diphosphooxymethyl)pyrimidine-binding site is contributed by Ser108. 134–136 contributes to the 2-[(2R,5Z)-2-carboxy-4-methylthiazol-5(2H)-ylidene]ethyl phosphate binding site; sequence TGT. Residue Lys137 participates in 4-amino-2-methyl-5-(diphosphooxymethyl)pyrimidine binding. 2-[(2R,5Z)-2-carboxy-4-methylthiazol-5(2H)-ylidene]ethyl phosphate is bound by residues Gly167 and 187–188; that span reads VS. The segment at 197-223 is disordered; it reads AAATRKLQGSVDTASVESQLPSEEPSA. Over residues 206 to 217 the composition is skewed to polar residues; sequence SVDTASVESQLP.

It belongs to the thiamine-phosphate synthase family. Mg(2+) serves as cofactor.

It carries out the reaction 2-[(2R,5Z)-2-carboxy-4-methylthiazol-5(2H)-ylidene]ethyl phosphate + 4-amino-2-methyl-5-(diphosphooxymethyl)pyrimidine + 2 H(+) = thiamine phosphate + CO2 + diphosphate. The enzyme catalyses 2-(2-carboxy-4-methylthiazol-5-yl)ethyl phosphate + 4-amino-2-methyl-5-(diphosphooxymethyl)pyrimidine + 2 H(+) = thiamine phosphate + CO2 + diphosphate. It catalyses the reaction 4-methyl-5-(2-phosphooxyethyl)-thiazole + 4-amino-2-methyl-5-(diphosphooxymethyl)pyrimidine + H(+) = thiamine phosphate + diphosphate. Its pathway is cofactor biosynthesis; thiamine diphosphate biosynthesis; thiamine phosphate from 4-amino-2-methyl-5-diphosphomethylpyrimidine and 4-methyl-5-(2-phosphoethyl)-thiazole: step 1/1. Condenses 4-methyl-5-(beta-hydroxyethyl)thiazole monophosphate (THZ-P) and 2-methyl-4-amino-5-hydroxymethyl pyrimidine pyrophosphate (HMP-PP) to form thiamine monophosphate (TMP). The protein is Thiamine-phosphate synthase of Haloquadratum walsbyi (strain DSM 16790 / HBSQ001).